The primary structure comprises 603 residues: Penicillin-binding protein activator LpoA (603 aa).

The signal sequence occupies residues 1–26; that stretch reads MAMNHHQRRSVPRLLTPIALSIVLSA. Residue Cys-27 is the site of N-palmitoyl cysteine attachment. Cys-27 is lipidated: S-diacylglycerol cysteine.

The protein belongs to the LpoA family. In terms of assembly, interacts with PBP1a.

Its subcellular location is the cell outer membrane. Regulator of peptidoglycan synthesis that is essential for the function of penicillin-binding protein 1A (PBP1a). This is Penicillin-binding protein activator LpoA from Vibrio cholerae serotype O1 (strain ATCC 39541 / Classical Ogawa 395 / O395).